Consider the following 332-residue polypeptide: Anthranilate phosphoribosyltransferase (332 aa).

5-phospho-alpha-D-ribose 1-diphosphate contacts are provided by residues G79, 82-83 (GD), T87, 89-92 (NIST), 107-115 (KHGNYGATS), and A119. G79 lines the anthranilate pocket. S91 contributes to the Mg(2+) binding site. Anthranilate is bound at residue N110. R165 serves as a coordination point for anthranilate. Mg(2+)-binding residues include D223 and E224.

The protein belongs to the anthranilate phosphoribosyltransferase family. In terms of assembly, homodimer. Mg(2+) serves as cofactor.

It carries out the reaction N-(5-phospho-beta-D-ribosyl)anthranilate + diphosphate = 5-phospho-alpha-D-ribose 1-diphosphate + anthranilate. Its pathway is amino-acid biosynthesis; L-tryptophan biosynthesis; L-tryptophan from chorismate: step 2/5. Catalyzes the transfer of the phosphoribosyl group of 5-phosphorylribose-1-pyrophosphate (PRPP) to anthranilate to yield N-(5'-phosphoribosyl)-anthranilate (PRA). The protein is Anthranilate phosphoribosyltransferase of Bacteroides thetaiotaomicron (strain ATCC 29148 / DSM 2079 / JCM 5827 / CCUG 10774 / NCTC 10582 / VPI-5482 / E50).